A 187-amino-acid polypeptide reads, in one-letter code: Accessory gene regulator protein B (187 aa).

Helical transmembrane passes span 49 to 69 (ISIF…YMLI), 82 to 102 (ILCY…LINI), 106 to 126 (FTYL…YAPA), 144 to 164 (LSII…PFYA), and 166 to 186 (FMLL…FPKE).

It belongs to the AgrB family.

It is found in the cell membrane. In terms of biological role, essential for the production of a quorum sensing system signal molecule, the autoinducing peptide (AIP). This quorum sensing system is responsible for the regulation of the expression of virulence factor genes. Involved in the proteolytic processing of AgrD, the precursor of AIP. The sequence is that of Accessory gene regulator protein B from Staphylococcus aureus (strain Mu50 / ATCC 700699).